The following is a 256-amino-acid chain: Imidazole glycerol phosphate synthase subunit HisF (256 aa).

Active-site residues include Asp11 and Asp130.

It belongs to the HisA/HisF family. In terms of assembly, heterodimer of HisH and HisF.

It is found in the cytoplasm. The enzyme catalyses 5-[(5-phospho-1-deoxy-D-ribulos-1-ylimino)methylamino]-1-(5-phospho-beta-D-ribosyl)imidazole-4-carboxamide + L-glutamine = D-erythro-1-(imidazol-4-yl)glycerol 3-phosphate + 5-amino-1-(5-phospho-beta-D-ribosyl)imidazole-4-carboxamide + L-glutamate + H(+). It participates in amino-acid biosynthesis; L-histidine biosynthesis; L-histidine from 5-phospho-alpha-D-ribose 1-diphosphate: step 5/9. IGPS catalyzes the conversion of PRFAR and glutamine to IGP, AICAR and glutamate. The HisF subunit catalyzes the cyclization activity that produces IGP and AICAR from PRFAR using the ammonia provided by the HisH subunit. The polypeptide is Imidazole glycerol phosphate synthase subunit HisF (Cupriavidus taiwanensis (strain DSM 17343 / BCRC 17206 / CCUG 44338 / CIP 107171 / LMG 19424 / R1) (Ralstonia taiwanensis (strain LMG 19424))).